The primary structure comprises 151 residues: Deoxyuridine 5'-triphosphate nucleotidohydrolase (151 aa).

Residues arginine 70–glycine 72, asparagine 83, leucine 87–aspartate 89, and methionine 97 contribute to the substrate site.

Belongs to the dUTPase family. Mg(2+) serves as cofactor.

It catalyses the reaction dUTP + H2O = dUMP + diphosphate + H(+). Its pathway is pyrimidine metabolism; dUMP biosynthesis; dUMP from dCTP (dUTP route): step 2/2. Functionally, this enzyme is involved in nucleotide metabolism: it produces dUMP, the immediate precursor of thymidine nucleotides and it decreases the intracellular concentration of dUTP so that uracil cannot be incorporated into DNA. This chain is Deoxyuridine 5'-triphosphate nucleotidohydrolase, found in Stutzerimonas stutzeri (strain A1501) (Pseudomonas stutzeri).